A 453-amino-acid chain; its full sequence is Na(+)/H(+) antiporter NhaA 2 (453 aa).

12 helical membrane passes run 23–43 (FLHI…AALI), 74–94 (LHFW…GMEI), 111–131 (LPMA…LSFG), 139–159 (GWAV…ALLG), 168–188 (VFLL…IAFF), 191–211 (GGLD…VIGL), 214–234 (IGVG…LGIL), 235–255 (LTGA…PVTA), 316–336 (VAFG…LSGV), 345–365 (WVMI…IVSV), 386–406 (IVLV…IANL), and 419–439 (LGVL…GVWS).

The protein belongs to the NhaA Na(+)/H(+) (TC 2.A.33) antiporter family.

The protein resides in the cell inner membrane. The catalysed reaction is Na(+)(in) + 2 H(+)(out) = Na(+)(out) + 2 H(+)(in). Na(+)/H(+) antiporter that extrudes sodium in exchange for external protons. This Pseudomonas putida (strain ATCC 700007 / DSM 6899 / JCM 31910 / BCRC 17059 / LMG 24140 / F1) protein is Na(+)/H(+) antiporter NhaA 2.